The sequence spans 408 residues: Peptidase T (408 aa).

A Zn(2+)-binding site is contributed by His78. Asp80 is a catalytic residue. Residue Asp140 participates in Zn(2+) binding. Residue Glu173 is the Proton acceptor of the active site. Residues Glu174, Asp196, and His379 each contribute to the Zn(2+) site.

This sequence belongs to the peptidase M20B family. Requires Zn(2+) as cofactor.

The protein localises to the cytoplasm. It catalyses the reaction Release of the N-terminal residue from a tripeptide.. Its function is as follows. Cleaves the N-terminal amino acid of tripeptides. The chain is Peptidase T from Escherichia coli O6:K15:H31 (strain 536 / UPEC).